We begin with the raw amino-acid sequence, 349 residues long: uncharacterized protein (349 aa).

Residues 221–241 traverse the membrane as a helical segment; that stretch reads AFVVWIGSGLNIIWWTGIVLL. The span at 328–339 shows a compositional bias: pro residues; that stretch reads VASAPPAVPSQP. The disordered stretch occupies residues 328 to 349; it reads VASAPPAVPSQPPEYSSVFPPV.

The protein resides in the host membrane. This is an uncharacterized protein from Human cytomegalovirus (strain Merlin) (HHV-5).